Consider the following 617-residue polypeptide: Cytoplasmic polyadenylation element-binding protein 1 (617 aa).

The segment at Met-1 to Gly-38 is disordered. RRM domains lie at Arg-273 to Leu-377 and Arg-394 to Thr-465. Disordered stretches follow at residues Asp-534–Thr-568 and Asn-592–Tyr-617. The segment covering Pro-542–Thr-563 has biased composition (basic residues).

Interacts with fbf-1.

Functionally, cytoplasmic polyadenylation element binding protein that binds to and regulates the translation of specific mRNAs. Essential for progression through meiosis. Involved in spermatogenesis. The polypeptide is Cytoplasmic polyadenylation element-binding protein 1 (cpb-1) (Caenorhabditis japonica).